We begin with the raw amino-acid sequence, 147 residues long: Proteinase inhibitor type-2 (147 aa).

The signal sequence occupies residues 1-25 (MAVHKEVSFVAYLLIVLGMFLYVDA). Tandem repeats lie at residues 25–81 (ALGC…DPKN) and 82–141 (PKAC…DEPK). Intrachain disulfides connect cysteine 28–cysteine 116, cysteine 32–cysteine 112, cysteine 40–cysteine 122, cysteine 52–cysteine 89, cysteine 55–cysteine 73, cysteine 56–cysteine 85, cysteine 62–cysteine 98, and cysteine 115–cysteine 133.

It belongs to the protease inhibitor I20 (potato type II proteinase inhibitor) family.

This chain is Proteinase inhibitor type-2, found in Solanum tuberosum (Potato).